The chain runs to 578 residues: Acyl-CoA ligase AKT1 (578 aa).

Residues 210–218 (SSGTSGAQK), 350–355 (QCYGAT), Asp-438, Arg-457, and Lys-554 contribute to the ATP site. The tract at residues 281-350 (DVEDLLSIVE…RHHPTWKTKQ (70 aa)) is SBD1. Positions 351–413 (CYGATEAGTA…VSSPSLAIGY (63 aa)) are SBD2. The Peroxisomal targeting signal type 1 motif lies at 576–578 (SKI).

It localises to the peroxisome. It functions in the pathway mycotoxin biosynthesis. Acyl-CoA ligase; part of the gene clusters that mediate the biosynthesis of the host-selective toxins (HSTs) AK-toxins responsible for Japanese pear black spot disease by the Japanese pear pathotype. AK-toxins are esters of 9,10-epoxy 8-hydroxy 9-methyldecatrienoic acid (EDA). On cellular level, AK-toxins affect plasma membrane of susceptible cells and cause a sudden increase in loss of K(+) after a few minutes of toxin treatment. The acyl-CoA ligase AKT1, the hydrolase AKT2 and enoyl-CoA hydratase AKT3 are all involved in the biosynthesis of the AK-, AF- and ACT-toxin common 9,10-epoxy-8-hydroxy-9-methyl-decatrienoic acid (EDA) structural moiety. Part of the EDA biosynthesis occurs in the peroxisome since these 3 enzymes are localized in peroxisomes. The exact roles of the 3 enzymes, as well as of additional AK-toxin clusters enzymes, including AKT4, AKT6 and AKTS1, have still to be elucidated. The Cytochrome P450 monooxygenase AKT7 on the other side functions to limit production of EDA and AK-toxin, probably via the catalysis of a side reaction of EDA or its precursor. This Alternaria alternata (Alternaria rot fungus) protein is Acyl-CoA ligase AKT1.